Reading from the N-terminus, the 399-residue chain is Subtilisin-like protease 4 (399 aa).

Residues 1 to 19 (MVCLKTLSVFLAAFAVADA) form the signal peptide. Residues 20-118 (RAVFKTQSNK…VEQDQVVRIS (99 aa)) constitute a propeptide that is removed on maturation. Positions 38–117 (YIVVMKDGVS…YVEQDQVVRI (80 aa)) constitute an Inhibitor I9 domain. One can recognise a Peptidase S8 domain in the interval 128–399 (SWGLGRVSHR…NRLLYNGSGQ (272 aa)). Active-site charge relay system residues include Asp160 and His191. A glycan (N-linked (GlcNAc...) asparagine) is linked at Asn252. The active-site Charge relay system is the Ser346. Residues 380–392 (AISNPGSGTTNRL) are compositionally biased toward polar residues. Positions 380–399 (AISNPGSGTTNRLLYNGSGQ) are disordered. Asn395 carries N-linked (GlcNAc...) asparagine glycosylation.

Belongs to the peptidase S8 family.

It localises to the secreted. Secreted subtilisin-like serine protease with keratinolytic activity that contributes to pathogenicity. The protein is Subtilisin-like protease 4 (SUB4) of Arthroderma gypseum (strain ATCC MYA-4604 / CBS 118893) (Microsporum gypseum).